Here is a 606-residue protein sequence, read N- to C-terminus: MCGIVGMVGENLKLEDLVTSLQKLEYRGYDSAGIAYLGDSFGVYKKKGRIDVLKNGLKQKLNDRFFVGIAHTRWATHGEPNDMNAHPHMDCKEEIAVVHNGIIENYREIREFLEQRGHVFSSETDTEVIAHLVEEEFEGDLLDAVLKAVKKLKGAYAIAVVHKNVPDTIVAARKGSPLVAGIGSGVGILASDVTPLLRFTKDVVFLEDGDVMVLRKDGFEIYNTDGVKQQRRVYHVNWDEKAAEKGGYKHFMYKEIMEDPQALVNALVGRVKNDRPFFEELEYYEELLKNADRIRVVSCGTSYYAGLVFKYFLENHTDIDVEIEVSSEFRYKRPHIKEGDVLIAISQSGETADTLESVRLAKKHGAKIVSIVNVVGSTLDRESDVTLFMNAGPEIGVAATKTYVAELAVLYLLGLKIMEINGYWDREAEEILDKLVRMPELLENVLRKDPQIRELSEKYKDYRNFMYIGRGYGYPTALEGALKLKEITYIHATAYQAGELKHGPIALLDVDFPVFAVMPDDSLFFKTKSNVIESKSRNAPVIVLGTEGNRSLEEITGDIIHVPPTHESLYPLMMAPVIQLFAYHIADLKGLDPDKPRNLAKSVTVE.

The Nucleophile; for GATase activity role is filled by C2. The Glutamine amidotransferase type-2 domain occupies 2–217 (CGIVGMVGEN…DGDVMVLRKD (216 aa)). 2 SIS domains span residues 284–423 (YEEL…INGY) and 455–596 (LSEK…PDKP). K601 (for Fru-6P isomerization activity) is an active-site residue.

As to quaternary structure, homodimer.

Its subcellular location is the cytoplasm. The catalysed reaction is D-fructose 6-phosphate + L-glutamine = D-glucosamine 6-phosphate + L-glutamate. Functionally, catalyzes the first step in hexosamine metabolism, converting fructose-6P into glucosamine-6P using glutamine as a nitrogen source. The chain is Glutamine--fructose-6-phosphate aminotransferase [isomerizing] from Thermotoga maritima (strain ATCC 43589 / DSM 3109 / JCM 10099 / NBRC 100826 / MSB8).